We begin with the raw amino-acid sequence, 276 residues long: Bis(5'-nucleosyl)-tetraphosphatase, symmetrical (276 aa).

It belongs to the Ap4A hydrolase family.

The catalysed reaction is P(1),P(4)-bis(5'-adenosyl) tetraphosphate + H2O = 2 ADP + 2 H(+). Its function is as follows. Hydrolyzes diadenosine 5',5'''-P1,P4-tetraphosphate to yield ADP. This chain is Bis(5'-nucleosyl)-tetraphosphatase, symmetrical, found in Neisseria gonorrhoeae (strain ATCC 700825 / FA 1090).